We begin with the raw amino-acid sequence, 653 residues long: MGHGRRISESIKKQLPVTGPEAPTVKNLMDWYLNNTNTHGCRRIAVSRGYLRRWIWICFTVSSVGMIFWQWTLLLMSYYTVSVSVTVQFQTLPFPAVTICNINPYRKNATSALLEELDKQTKLILKELYTSCTGCSNRKLRSVLLNEAPEEDSGVAKLLQDMPLMKFEVIKEDHVIVSELSSNRQYRINNTFITRMYNNMDLATVGEQVGFKICDANKSNCIIYTFNSGVTAILEWYRLNYLNIMAQIPNEKKLEMGYSADDLIVTCMYDGQSCDSRNFTLFQHPLHGNCYTFNSGDDGNILQTLTGGSEYGLKLTLYLENDDYNPYLFTSMGAKIIVHDQTEYPLVDDVGLEIQTATETLIGLQVTTSAKLSKPYSDCTMDGSDVLEQNLYNTSYSLQICLHSCFQTEMISNCGCAYYEQPLPSGAEYCYYEKYPGWIYCYYQLQDKFVNERLACQDICKETCNSKDWDLTKSLARWPSVASKDWVLNLLNWERGLNNTLNKNDLASIAIFYQDLNLRSLSESPANSIATLLSNMGGQLGLWMSCSIVCFLEMWEVFLVDILTIIARYWLHRGRQWWRKRKERQMQQPSPPDHDTGHHNPVCIDDEDPPTFHTAMQLPCVQTGPVPSTPPPQYNALRIQSVFDEQVSDTEVN.

Residues 1 to 54 are Cytoplasmic-facing; the sequence is MGHGRRISESIKKQLPVTGPEAPTVKNLMDWYLNNTNTHGCRRIAVSRGYLRRW. The chain crosses the membrane as a helical span at residues 55 to 75; that stretch reads IWICFTVSSVGMIFWQWTLLL. Topologically, residues 76–546 are extracellular; sequence MSYYTVSVSV…GGQLGLWMSC (471 aa). 8 disulfides stabilise this stretch: Cys-100-Cys-290, Cys-214-Cys-221, Cys-267-Cys-274, Cys-379-Cys-464, Cys-401-Cys-460, Cys-405-Cys-456, Cys-414-Cys-441, and Cys-416-Cys-430. Residues 547–567 traverse the membrane as a helical segment; sequence SIVCFLEMWEVFLVDILTIIA. Topologically, residues 568 to 653 are cytoplasmic; it reads RYWLHRGRQW…DEQVSDTEVN (86 aa). Residues 582-608 form a disordered region; the sequence is KERQMQQPSPPDHDTGHHNPVCIDDED.

The protein belongs to the amiloride-sensitive sodium channel (TC 1.A.6) family. SCNN1G subfamily. Component of the heterotrimeric epithelial sodium channel (ENaC) composed of an alpha/SCNN1A, a beta/SCNN1B and a gamma/SCNN1G subunit. Strongly expressed in gill, liver, kidney and rectum and more weakly in heart, muscle and intestine.

It localises to the apical cell membrane. The catalysed reaction is Na(+)(in) = Na(+)(out). With respect to regulation, originally identified and characterized by its inhibition by the diuretic drug amiloride. Its function is as follows. This is one of the three pore-forming subunits of the heterotrimeric epithelial sodium channel (ENaC), a critical regulator of sodium balance and fluid homeostasis. ENaC operates in epithelial tissues, where it mediates the electrodiffusion of sodium ions from extracellular fluid through the apical membrane of cells, with water following osmotically. This Neoceratodus forsteri (Australian lungfish) protein is Epithelial sodium channel subunit gamma.